Reading from the N-terminus, the 461-residue chain is Major capsid protein (461 aa).

Residues 1–18 show a composition bias toward polar residues; it reads MSTPTISADTTAQNATST. The tract at residues 1–22 is disordered; it reads MSTPTISADTTAQNATSTEVRE.

The protein localises to the virion. Functionally, major protein of the capsid. The chain is Major capsid protein (MCP) from Spodoptera frugiperda ascovirus 1a (SfAV-1a).